A 155-amino-acid polypeptide reads, in one-letter code: Endoribonuclease YbeY (155 aa).

The Zn(2+) site is built by His120, His124, and His130.

Belongs to the endoribonuclease YbeY family. It depends on Zn(2+) as a cofactor.

Its subcellular location is the cytoplasm. In terms of biological role, single strand-specific metallo-endoribonuclease involved in late-stage 70S ribosome quality control and in maturation of the 3' terminus of the 16S rRNA. This chain is Endoribonuclease YbeY, found in Staphylococcus epidermidis (strain ATCC 12228 / FDA PCI 1200).